The sequence spans 310 residues: Protein CUP-SHAPED COTYLEDON 1 (310 aa).

An NAC domain is found at 20–172 (MPPGFRFHPT…EWVLCKVCLK (153 aa)). The DNA-binding element occupies 119 to 178 (LGMKKTLVFYKGRAPKGEKSCWVMHEYRLDGKFSYHYISSSAKDEWVLCKVCLKSGVVSR). Involved in transactivation activity stretches follow at residues 179–210 (ETNL…NTFA) and 306–310 (WPFTL).

As to expression, expressed in inflorescence stems, rosette leaves, aerial parts of seedlings, flowers, floral buds and roots.

It localises to the nucleus. In terms of biological role, transcription activator of STM and KNAT6. Involved in molecular mechanisms regulating shoot apical meristem (SAM) formation during embryogenesis and organ separation. Required for the fusion of septa of gynoecia along the length of the ovaries. Activates the shoot formation in callus in a STM-dependent manner. Seems to act as an inhibitor of cell division. This is Protein CUP-SHAPED COTYLEDON 1 (NAC054) from Arabidopsis thaliana (Mouse-ear cress).